The following is a 521-amino-acid chain: Bifunctional purine biosynthesis protein PurH (521 aa).

Residues 1-145 form the MGS-like domain; that stretch reads MIKQALISVS…KNHRDVTVVV (145 aa).

This sequence belongs to the PurH family.

The enzyme catalyses (6R)-10-formyltetrahydrofolate + 5-amino-1-(5-phospho-beta-D-ribosyl)imidazole-4-carboxamide = 5-formamido-1-(5-phospho-D-ribosyl)imidazole-4-carboxamide + (6S)-5,6,7,8-tetrahydrofolate. It catalyses the reaction IMP + H2O = 5-formamido-1-(5-phospho-D-ribosyl)imidazole-4-carboxamide. The protein operates within purine metabolism; IMP biosynthesis via de novo pathway; 5-formamido-1-(5-phospho-D-ribosyl)imidazole-4-carboxamide from 5-amino-1-(5-phospho-D-ribosyl)imidazole-4-carboxamide (10-formyl THF route): step 1/1. It functions in the pathway purine metabolism; IMP biosynthesis via de novo pathway; IMP from 5-formamido-1-(5-phospho-D-ribosyl)imidazole-4-carboxamide: step 1/1. The chain is Bifunctional purine biosynthesis protein PurH from Burkholderia cenocepacia (strain ATCC BAA-245 / DSM 16553 / LMG 16656 / NCTC 13227 / J2315 / CF5610) (Burkholderia cepacia (strain J2315)).